Here is a 1032-residue protein sequence, read N- to C-terminus: MEAAAAVVAAEAEVENEDGDSSCGDVCFMDKGLQSISELSLDSTLHAVNLHCNNISKIEAIDHIWNLQHLDLSSNQISRIEGLNTLTKLCTLNLSCNLITKVEGLEELINLTRLNVSYNHIDDLSGLIPLHGIKHKLRYIDLHSNRIDSIHHLLQCMVGLHFLTNLILEKDGDDNPVCRLPGYRAVILQTLPQLRILDCKNIFGEPVNLTEINSSQLQCLEGLLDNLVSSDSPLNISEDEIIDRMPVITAPIDELVPLEQFASTPSDAVLTSFMSVCQSSEPEKNNHENDLQNEIKLQKLDDQILQLLNETSNSIDNVLEKDPRPKRDTDITSESDYGNRKECNRKVPRRSKIPYDAKTIQTIKHHNKNYNSFVSCNRKMKPPYLKELYVSSSLANCPMLQESEKPKTEIIKVDQSHSEDNTYQSLVEQLDQEREKRWRAEQAENKLMDYIDELHKHANEKEDIHSLALLTTDRLKEIIFRERNSKGQLEVMVHKLQNEIKKLTVELMKAKDQQEDHLKHLRTLEKTLEKMERQKRQQQAAQIRLIQEVELKASAADREIYLLRTSLHREREQAQQLHQLLALKEQEHRKELETREFFTDADFQDALAKEIAKEEKKHEQMIKEYQEKIDVLSQQYMDLENEFRIALTVEARRFQDVKDGFENVATELAKSKHALIWAQRKENESSSLIKDLTCMVKEQKTKLAEVSKLKQETAANLQNQINTLEILIEDDKQKSIQIELLKHEKVQLISELAAKESLIFGLRTERKVWGHELAQQGSSLAQNRGKLEAQIESLSRENECLRKTNESDSDALRIKCKIIDDQTETIRKLKDCLQEKDEHIKRLQEKITEIEKCTQEQLDEKSSQLDEVLEKLERHNERKEKLKQQLKGKEVELEEIRKAYSTLNRKWHDKGELLCHLETQVKEVKEKFENKEKKLKAERDKSIELQKNAMEKLHSMDDAFKRQVDAIVEAHQAEIAQLANEKQKCIDSANLKVHQIEKEMRELLEETCKNKKTMEAKIKQLAFALNEIQQDM.

LRR repeat units lie at residues 44 to 65 (TLHA…DHIW), 66 to 87 (NLQH…NTLT), 88 to 109 (KLCT…EELI), 110 to 131 (NLTR…IPLH), and 136 to 157 (KLRY…LQCM). The region spanning 175–218 (NPVCRLPGYRAVILQTLPQLRILDCKNIFGEPVNLTEINSSQLQ) is the LRRCT domain. Positions 316 to 345 (DNVLEKDPRPKRDTDITSESDYGNRKECNR) are disordered. Basic and acidic residues predominate over residues 318–330 (VLEKDPRPKRDTD). The stretch at 421-647 (NTYQSLVEQL…DLENEFRIAL (227 aa)) forms a coiled coil.

This sequence belongs to the LRRCC1 family.

It localises to the cytoplasm. The protein localises to the cytoskeleton. It is found in the microtubule organizing center. The protein resides in the centrosome. Its subcellular location is the centriole. Its function is as follows. Required for the organization of the mitotic spindle. Maintains the structural integrity of centrosomes during mitosis. In Homo sapiens (Human), this protein is Leucine-rich repeat and coiled-coil domain-containing protein 1 (LRRCC1).